A 395-amino-acid polypeptide reads, in one-letter code: Pyruvate synthase subunit PorA (395 aa).

Heterotetramer of one alpha, one beta, one delta and one gamma chain.

The catalysed reaction is 2 oxidized [2Fe-2S]-[ferredoxin] + pyruvate + CoA = 2 reduced [2Fe-2S]-[ferredoxin] + acetyl-CoA + CO2 + H(+). This chain is Pyruvate synthase subunit PorA (porA), found in Pyrococcus abyssi (strain GE5 / Orsay).